A 181-amino-acid polypeptide reads, in one-letter code: ATP-dependent protease subunit HslV (181 aa).

Residue Thr-11 is part of the active site. Na(+)-binding residues include Ala-166, Cys-169, and Thr-172.

The protein belongs to the peptidase T1B family. HslV subfamily. As to quaternary structure, a double ring-shaped homohexamer of HslV is capped on each side by a ring-shaped HslU homohexamer. The assembly of the HslU/HslV complex is dependent on binding of ATP.

It is found in the cytoplasm. It carries out the reaction ATP-dependent cleavage of peptide bonds with broad specificity.. Allosterically activated by HslU binding. Functionally, protease subunit of a proteasome-like degradation complex believed to be a general protein degrading machinery. The sequence is that of ATP-dependent protease subunit HslV from Chlorobaculum parvum (strain DSM 263 / NCIMB 8327) (Chlorobium vibrioforme subsp. thiosulfatophilum).